Reading from the N-terminus, the 65-residue chain is Large ribosomal subunit protein bL31 (65 aa).

Residues Cys16, Cys18, Cys36, and Cys39 each contribute to the Zn(2+) site.

It belongs to the bacterial ribosomal protein bL31 family. Type A subfamily. As to quaternary structure, part of the 50S ribosomal subunit. Zn(2+) is required as a cofactor.

Binds the 23S rRNA. This is Large ribosomal subunit protein bL31 from Desulfitobacterium hafniense (strain DSM 10664 / DCB-2).